A 307-amino-acid polypeptide reads, in one-letter code: 2-carboxy-1,4-naphthoquinone phytyltransferase (307 aa).

Transmembrane regions (helical) follow at residues 27–47 (MYTV…GLTG), 51–71 (GDVF…INLS), 98–118 (LVFL…MSMS), 125–145 (TVLE…GPPF), 147–167 (LGYL…LAIA), 177–197 (FSWN…IILF), 223–243 (LGSQ…AIGV), and 284–304 (FIAV…YGWA).

It belongs to the MenA family. Type 2 subfamily.

Its subcellular location is the cell inner membrane. The catalysed reaction is 2-carboxy-1,4-naphthoquinone + phytyl diphosphate + H(+) = demethylphylloquinone + CO2 + diphosphate. It participates in cofactor biosynthesis; phylloquinone biosynthesis. Its function is as follows. Involved in the synthesis of phylloquinone (vitamin K1). Catalyzes the transfer of a prenyl chain to 2-carboxy-1,4-naphthoquinone. The chain is 2-carboxy-1,4-naphthoquinone phytyltransferase from Synechocystis sp. (strain ATCC 27184 / PCC 6803 / Kazusa).